We begin with the raw amino-acid sequence, 455 residues long: Fez family zinc finger protein 2 (455 aa).

Residues 1–22 (MASSASLETMVPPACPRAGASP) are disordered. The short motif at 27-42 (TLAFSIERIMAKTSEP) is the Engrailed homology 1 repressor element. 6 C2H2-type zinc fingers span residues 272–294 (FTCE…MPVH), 300–322 (FVCK…KIIH), 328–350 (HKCN…IRIH), 356–378 (FVCE…KLTH), 384–406 (YKCT…MHTH), and 412–435 (FTCA…RKLH).

This sequence belongs to the krueppel C2H2-type zinc-finger protein family. In terms of tissue distribution, highly expressed in neocortical layer V, moderately expressed in layer VI. Expressed in subcortically projecting neurons.

The protein resides in the nucleus. Its function is as follows. Transcription repressor. Required for the specification of corticospinal motor neurons and other subcerebral projection neurons. May play a role in layer and neuronal subtype-specific patterning of subcortical projections and axonal fasciculation. Controls the development of dendritic arborization and spines of large layer V pyramidal neurons. Plays a role in rostro-caudal patterning of the diencephalon and in prethalamic formation. In Mus musculus (Mouse), this protein is Fez family zinc finger protein 2 (Fezf2).